We begin with the raw amino-acid sequence, 291 residues long: Elongation factor Ts (291 aa).

The involved in Mg(2+) ion dislocation from EF-Tu stretch occupies residues 79-82 (TDFV).

The protein belongs to the EF-Ts family.

The protein localises to the cytoplasm. Its function is as follows. Associates with the EF-Tu.GDP complex and induces the exchange of GDP to GTP. It remains bound to the aminoacyl-tRNA.EF-Tu.GTP complex up to the GTP hydrolysis stage on the ribosome. This chain is Elongation factor Ts, found in Roseobacter denitrificans (strain ATCC 33942 / OCh 114) (Erythrobacter sp. (strain OCh 114)).